We begin with the raw amino-acid sequence, 239 residues long: Ribonuclease PH (239 aa).

Residues Arg-86 and 124-126 (GTR) contribute to the phosphate site.

Belongs to the RNase PH family. In terms of assembly, homohexameric ring arranged as a trimer of dimers.

The catalysed reaction is tRNA(n+1) + phosphate = tRNA(n) + a ribonucleoside 5'-diphosphate. Functionally, phosphorolytic 3'-5' exoribonuclease that plays an important role in tRNA 3'-end maturation. Removes nucleotide residues following the 3'-CCA terminus of tRNAs; can also add nucleotides to the ends of RNA molecules by using nucleoside diphosphates as substrates, but this may not be physiologically important. Probably plays a role in initiation of 16S rRNA degradation (leading to ribosome degradation) during starvation. The chain is Ribonuclease PH from Azoarcus sp. (strain BH72).